The primary structure comprises 918 residues: Signal transduction histidine-protein kinase BarA (918 aa).

At 1–10 (MTNYSLRARM) the chain is on the cytoplasmic side. The chain crosses the membrane as a helical span at residues 11–31 (MILILAPTVLIGLLLSIFFVV). Residues 32-175 (HRYNDLQRQL…LKSVRLQQYK (144 aa)) lie on the Periplasmic side of the membrane. The helical transmembrane segment at 176–196 (EIFISCVMMLFCIGIALIFGW) threads the bilayer. Over 197-918 (RLMRDVTGPI…VAREASKILG (722 aa)) the chain is Cytoplasmic. The HAMP domain maps to 200 to 252 (RDVTGPIRNMVNTVDRIRRGQLDSRVEGFMLGELDMLKNGINSMAMSLAAYHE). The 222-residue stretch at 299 to 520 (NMSHELRTPL…TFWFHINLDL (222 aa)) folds into the Histidine kinase domain. Residue histidine 302 is modified to Phosphohistidine; by autocatalysis. Residues 669-785 (TVMAVDDNPA…RLHNLLLRYK (117 aa)) form the Response regulatory domain. The residue at position 718 (aspartate 718) is a 4-aspartylphosphate. The HPt domain occupies 822-918 (KTDLARDMLQ…VAREASKILG (97 aa)). Histidine 861 is subject to Phosphohistidine.

Activation requires a sequential transfer of a phosphate group from a His in the primary transmitter domain, to an Asp in the receiver domain and to a His in the secondary transmitter domain.

It localises to the cell inner membrane. The catalysed reaction is ATP + protein L-histidine = ADP + protein N-phospho-L-histidine.. Its function is as follows. Member of the two-component regulatory system UvrY/BarA involved in the regulation of carbon metabolism via the CsrA/CsrB regulatory system. Phosphorylates UvrY, probably via a four-step phosphorelay. The protein is Signal transduction histidine-protein kinase BarA (barA) of Shigella flexneri.